A 238-amino-acid chain; its full sequence is Uridylate kinase (238 aa).

12-15 serves as a coordination point for ATP; it reads KLSG. Gly-54 lines the UMP pocket. Gly-55 and Arg-59 together coordinate ATP. UMP-binding positions include Asp-74 and 135–142; that span reads TGNPFFTT. Residues Thr-162, Tyr-168, and Asp-171 each contribute to the ATP site.

Belongs to the UMP kinase family. As to quaternary structure, homohexamer.

It is found in the cytoplasm. The enzyme catalyses UMP + ATP = UDP + ADP. It functions in the pathway pyrimidine metabolism; CTP biosynthesis via de novo pathway; UDP from UMP (UMPK route): step 1/1. Inhibited by UTP. Its function is as follows. Catalyzes the reversible phosphorylation of UMP to UDP. In Azoarcus sp. (strain BH72), this protein is Uridylate kinase.